A 145-amino-acid polypeptide reads, in one-letter code: MTEKSLKLFIVLSRAYRSINDHMNKHIHKHGLNPTEFAVLELLYHKGDQPLQQIGDKILLASGSITYVVDKLEQKELLIRKASPTDRRVTFAQITEKGIGLLNDIFPDHAAEIDEMISVLSEEEVEMCTEMLKRVGLNAKQFHNK.

The HTH marR-type domain maps to 5–137 (SLKLFIVLSR…CTEMLKRVGL (133 aa)). The H-T-H motif DNA-binding region spans 51-74 (LQQIGDKILLASGSITYVVDKLEQ).

Functionally, negatively regulates mhqA, mhqED, mhqNOP, and azoR2 which may contribute to the degradation of aromatic compounds. The polypeptide is HTH-type transcriptional regulator MhqR (mhqR) (Bacillus subtilis (strain 168)).